A 327-amino-acid chain; its full sequence is Malate dehydrogenase (327 aa).

11-17 provides a ligand contact to NAD(+); that stretch reads GAAGQIG. Substrate is bound by residues R92 and R98. Residues N105, Q112, and 129–131 each bind NAD(+); that span reads VGN. Substrate is bound by residues N131 and R162. H187 functions as the Proton acceptor in the catalytic mechanism.

It belongs to the LDH/MDH superfamily. MDH type 2 family.

It carries out the reaction (S)-malate + NAD(+) = oxaloacetate + NADH + H(+). Its function is as follows. Catalyzes the reversible oxidation of malate to oxaloacetate. This is Malate dehydrogenase from Thermus thermophilus (strain ATCC BAA-163 / DSM 7039 / HB27).